Reading from the N-terminus, the 100-residue chain is Omega-hexatoxin-Asp2b (100 aa).

An N-terminal signal peptide occupies residues 1–23 (MKFSKLSITLAVILTQAVFVLCG). Residues 24–55 (MKNEDFMEKGLESNELHDAIKKPVNSGKPDTE) constitute a propeptide that is removed on maturation. 3 cysteine pairs are disulfide-bonded: C60–C73, C66–C79, and C72–C84.

Belongs to the neurotoxin 15 family. 02 (omega-actx) subfamily. As to expression, expressed by the venom gland.

It is found in the secreted. Its function is as follows. Potent inhibitor of insect, but not mammalian, voltage-gated calcium channels (Cav). The chain is Omega-hexatoxin-Asp2b from Atrax sp. (strain Illawarra) (Funnel-web spider).